A 161-amino-acid chain; its full sequence is Putative pre-16S rRNA nuclease (161 aa).

Positions 141 to 161 (AAGSPPGALVPRNRVDPDRHA) are disordered.

Belongs to the YqgF nuclease family.

It localises to the cytoplasm. In terms of biological role, could be a nuclease involved in processing of the 5'-end of pre-16S rRNA. This chain is Putative pre-16S rRNA nuclease, found in Clavibacter michiganensis subsp. michiganensis (strain NCPPB 382).